The sequence spans 212 residues: Thymidylate kinase (212 aa).

10 to 17 contributes to the ATP binding site; sequence GPEGAGKT.

This sequence belongs to the thymidylate kinase family.

It catalyses the reaction dTMP + ATP = dTDP + ADP. Its function is as follows. Phosphorylation of dTMP to form dTDP in both de novo and salvage pathways of dTTP synthesis. The sequence is that of Thymidylate kinase from Bacillus licheniformis (strain ATCC 14580 / DSM 13 / JCM 2505 / CCUG 7422 / NBRC 12200 / NCIMB 9375 / NCTC 10341 / NRRL NRS-1264 / Gibson 46).